A 332-amino-acid chain; its full sequence is Ketol-acid reductoisomerase (NADP(+)) (332 aa).

The 181-residue stretch at 2 to 182 (AKVYYDEDAS…GCTRAGLIET (181 aa)) folds into the KARI N-terminal Rossmann domain. Residues 25–28 (YGSQ), S51, S53, and 83–86 (DTIQ) contribute to the NADP(+) site. H108 is an active-site residue. G134 contributes to the NADP(+) binding site. Residues 183–327 (TFKEETETDL…KELRKMMPWL (145 aa)) form the KARI C-terminal knotted domain. Positions 191, 195, 227, and 231 each coordinate Mg(2+). S252 lines the substrate pocket.

This sequence belongs to the ketol-acid reductoisomerase family. Mg(2+) serves as cofactor.

The catalysed reaction is (2R)-2,3-dihydroxy-3-methylbutanoate + NADP(+) = (2S)-2-acetolactate + NADPH + H(+). It carries out the reaction (2R,3R)-2,3-dihydroxy-3-methylpentanoate + NADP(+) = (S)-2-ethyl-2-hydroxy-3-oxobutanoate + NADPH + H(+). The protein operates within amino-acid biosynthesis; L-isoleucine biosynthesis; L-isoleucine from 2-oxobutanoate: step 2/4. Its pathway is amino-acid biosynthesis; L-valine biosynthesis; L-valine from pyruvate: step 2/4. Its function is as follows. Involved in the biosynthesis of branched-chain amino acids (BCAA). Catalyzes an alkyl-migration followed by a ketol-acid reduction of (S)-2-acetolactate (S2AL) to yield (R)-2,3-dihydroxy-isovalerate. In the isomerase reaction, S2AL is rearranged via a Mg-dependent methyl migration to produce 3-hydroxy-3-methyl-2-ketobutyrate (HMKB). In the reductase reaction, this 2-ketoacid undergoes a metal-dependent reduction by NADPH to yield (R)-2,3-dihydroxy-isovalerate. The chain is Ketol-acid reductoisomerase (NADP(+)) from Persephonella marina (strain DSM 14350 / EX-H1).